The sequence spans 178 residues: Nicotinamide-nucleotide adenylyltransferase (178 aa).

The protein belongs to the archaeal NMN adenylyltransferase family. As to quaternary structure, homohexamer.

It is found in the cytoplasm. It catalyses the reaction beta-nicotinamide D-ribonucleotide + ATP + H(+) = diphosphate + NAD(+). It participates in cofactor biosynthesis; NAD(+) biosynthesis; NAD(+) from nicotinamide D-ribonucleotide: step 1/1. This chain is Nicotinamide-nucleotide adenylyltransferase, found in Methanothermobacter thermautotrophicus (strain ATCC 29096 / DSM 1053 / JCM 10044 / NBRC 100330 / Delta H) (Methanobacterium thermoautotrophicum).